The following is a 272-amino-acid chain: Shikimate dehydrogenase (NADP(+)) (272 aa).

Shikimate is bound by residues 14–16 (SKS) and T61. The Proton acceptor role is filled by K65. Residue E77 participates in NADP(+) binding. The shikimate site is built by N86 and D102. NADP(+)-binding positions include 126–130 (GAGGA), 149–154 (NRTVSR), and M213. Y215 serves as a coordination point for shikimate. Residue G237 coordinates NADP(+).

It belongs to the shikimate dehydrogenase family. As to quaternary structure, homodimer.

The enzyme catalyses shikimate + NADP(+) = 3-dehydroshikimate + NADPH + H(+). It participates in metabolic intermediate biosynthesis; chorismate biosynthesis; chorismate from D-erythrose 4-phosphate and phosphoenolpyruvate: step 4/7. Involved in the biosynthesis of the chorismate, which leads to the biosynthesis of aromatic amino acids. Catalyzes the reversible NADPH linked reduction of 3-dehydroshikimate (DHSA) to yield shikimate (SA). The chain is Shikimate dehydrogenase (NADP(+)) from Shigella flexneri.